A 113-amino-acid polypeptide reads, in one-letter code: Large ribosomal subunit protein bL19 (113 aa).

It belongs to the bacterial ribosomal protein bL19 family.

Its function is as follows. This protein is located at the 30S-50S ribosomal subunit interface and may play a role in the structure and function of the aminoacyl-tRNA binding site. In Corynebacterium urealyticum (strain ATCC 43042 / DSM 7109), this protein is Large ribosomal subunit protein bL19.